The sequence spans 155 residues: Small ribosomal subunit protein uS7c (155 aa).

Belongs to the universal ribosomal protein uS7 family. In terms of assembly, part of the 30S ribosomal subunit.

It is found in the plastid. It localises to the chloroplast. Its function is as follows. One of the primary rRNA binding proteins, it binds directly to 16S rRNA where it nucleates assembly of the head domain of the 30S subunit. The sequence is that of Small ribosomal subunit protein uS7c (rps7) from Euonymus alatus (Burning bush).